Consider the following 115-residue polypeptide: Iron-sulfur cluster insertion protein ErpA (115 aa).

The iron-sulfur cluster site is built by C43, C107, and C109.

The protein belongs to the HesB/IscA family. In terms of assembly, homodimer. The cofactor is iron-sulfur cluster.

In terms of biological role, required for insertion of 4Fe-4S clusters for at least IspG. This is Iron-sulfur cluster insertion protein ErpA from Buchnera aphidicola subsp. Baizongia pistaciae (strain Bp).